We begin with the raw amino-acid sequence, 387 residues long: Succinate--CoA ligase [ADP-forming] subunit beta (387 aa).

Residues 9 to 236 (RDLFESYGVP…AAAADPLEAK (228 aa)) form the ATP-grasp domain. ATP contacts are provided by residues K45, 52 to 54 (GRG), A94, and E99. Mg(2+) contacts are provided by N191 and D205. Residues N256 and 318 to 320 (GIT) each bind substrate.

This sequence belongs to the succinate/malate CoA ligase beta subunit family. In terms of assembly, heterotetramer of two alpha and two beta subunits. It depends on Mg(2+) as a cofactor.

The catalysed reaction is succinate + ATP + CoA = succinyl-CoA + ADP + phosphate. The enzyme catalyses GTP + succinate + CoA = succinyl-CoA + GDP + phosphate. It participates in carbohydrate metabolism; tricarboxylic acid cycle; succinate from succinyl-CoA (ligase route): step 1/1. Its function is as follows. Succinyl-CoA synthetase functions in the citric acid cycle (TCA), coupling the hydrolysis of succinyl-CoA to the synthesis of either ATP or GTP and thus represents the only step of substrate-level phosphorylation in the TCA. The beta subunit provides nucleotide specificity of the enzyme and binds the substrate succinate, while the binding sites for coenzyme A and phosphate are found in the alpha subunit. In Clavibacter michiganensis subsp. michiganensis (strain NCPPB 382), this protein is Succinate--CoA ligase [ADP-forming] subunit beta.